Consider the following 147-residue polypeptide: Small ribosomal subunit protein bS16 (147 aa).

The tract at residues 89–147 is disordered; that stretch reads AWTHGNNPKKAEPGKKAQERAKERADKAEAKAAAAAEAAAAPAEEAPAEAAPAEETSES. Over residues 97 to 118 the composition is skewed to basic and acidic residues; sequence KKAEPGKKAQERAKERADKAEA. The segment covering 119 to 147 has biased composition (low complexity); that stretch reads KAAAAAEAAAAPAEEAPAEAAPAEETSES.

This sequence belongs to the bacterial ribosomal protein bS16 family.

This is Small ribosomal subunit protein bS16 from Hyphomonas neptunium (strain ATCC 15444).